Consider the following 655-residue polypeptide: ATP-dependent zinc metalloprotease FtsH (655 aa).

At 1–17 the chain is on the cytoplasmic side; it reads MPIETEPNRTRKNFEPK. The helical transmembrane segment at 18-38 threads the bilayer; it reads RFGGSLFILFTLLLFLNLFVL. Topologically, residues 39 to 124 are lumenal; sequence RGPRFPITAY…APPPSSLSWL (86 aa). The helical transmembrane segment at 125-145 threads the bilayer; sequence PTLLGWVVPPLIFFGIWSWLI. Residues 146-655 are Cytoplasmic-facing; it reads NRNQGAGPAA…LNSHQLIGIN (510 aa). 216–223 contributes to the ATP binding site; it reads GPPGTGKT. Histidine 440 is a binding site for Zn(2+). Residue glutamate 441 is part of the active site. The Zn(2+) site is built by histidine 444 and aspartate 517.

The protein in the central section; belongs to the AAA ATPase family. It in the C-terminal section; belongs to the peptidase M41 family. As to quaternary structure, homohexamer. Zn(2+) is required as a cofactor.

The protein resides in the cellular thylakoid membrane. Its function is as follows. Acts as a processive, ATP-dependent zinc metallopeptidase for both cytoplasmic and membrane proteins. Plays a role in the quality control of integral membrane proteins. This Acaryochloris marina (strain MBIC 11017) protein is ATP-dependent zinc metalloprotease FtsH.